A 134-amino-acid chain; its full sequence is Cystatin-1 (134 aa).

The N-terminal stretch at methionine 1–serine 17 is a signal peptide. The region spanning glycine 21 to tryptophan 116 is the Cystatin domain. The short motif at glutamine 65–glycine 69 is the Secondary area of contact element. 2 disulfide bridges follow: cysteine 83-cysteine 96 and cysteine 107-cysteine 127.

This sequence belongs to the cystatin family. Expressed by the venom gland.

The protein localises to the secreted. In terms of biological role, inhibits various C1 cysteine proteases. This protein has no toxic activity and its function in the venom is unknown. It may play a role as a housekeeping or regulatory protein. The sequence is that of Cystatin-1 from Chilobrachys guangxiensis (Chinese earth tiger tarantula).